A 533-amino-acid chain; its full sequence is Zinc finger protein 692 (533 aa).

Disordered stretches follow at residues 124-251 (SLIP…PATL) and 290-310 (TESLDSPGSQAQSAPNPTCDE). Residues 149–178 (EARRKQEAEGLECEHRERTQETRLSRRVEP) show a composition bias toward basic and acidic residues. The span at 190–208 (QVVEEEEEEEEEEEEEELL) shows a compositional bias: acidic residues. Ser-233 is modified (phosphoserine). Residues 290-305 (TESLDSPGSQAQSAPN) are compositionally biased toward polar residues. 5 consecutive C2H2-type zinc fingers follow at residues 329–354 (MPCDFPGCGRIFSNRQYLNHHKKYQH), 360–384 (FCCPEPACGKSFNFKKHLKEHVKLH), 390–412 (YICEFCARSFRTSSNLVIHRRIH), 418–440 (LQCEICGFTCRQKASLNWHRRKH), and 449–472 (FPCEFCGKRFEKPDSVVAHCSKSH). Ser-471 carries the post-translational modification Phosphoserine. A disordered region spans residues 478–533 (VQESPGSLGSSPSISAPEPLQSPEGTSFSTSYDSNPAPSTSISSPGVPAPRNTEKS). Over residues 481-492 (SPGSLGSSPSIS) the composition is skewed to low complexity. Over residues 500–521 (PEGTSFSTSYDSNPAPSTSISS) the composition is skewed to polar residues.

Belongs to the krueppel C2H2-type zinc-finger protein family. Phosphorylation at Ser-471 results in loss of DNA-binding activity.

Its subcellular location is the nucleus. May act as an transcriptional repressor for PCK1 gene expression, in turns may participate in the hepatic gluconeogenesis regulation through the activated AMPK signaling pathway. The sequence is that of Zinc finger protein 692 from Rattus norvegicus (Rat).